The primary structure comprises 99 residues: Aspartyl/glutamyl-tRNA(Asn/Gln) amidotransferase subunit C (99 aa).

It belongs to the GatC family. Heterotrimer of A, B and C subunits.

The catalysed reaction is L-glutamyl-tRNA(Gln) + L-glutamine + ATP + H2O = L-glutaminyl-tRNA(Gln) + L-glutamate + ADP + phosphate + H(+). It carries out the reaction L-aspartyl-tRNA(Asn) + L-glutamine + ATP + H2O = L-asparaginyl-tRNA(Asn) + L-glutamate + ADP + phosphate + 2 H(+). In terms of biological role, allows the formation of correctly charged Asn-tRNA(Asn) or Gln-tRNA(Gln) through the transamidation of misacylated Asp-tRNA(Asn) or Glu-tRNA(Gln) in organisms which lack either or both of asparaginyl-tRNA or glutaminyl-tRNA synthetases. The reaction takes place in the presence of glutamine and ATP through an activated phospho-Asp-tRNA(Asn) or phospho-Glu-tRNA(Gln). The polypeptide is Aspartyl/glutamyl-tRNA(Asn/Gln) amidotransferase subunit C (Albidiferax ferrireducens (strain ATCC BAA-621 / DSM 15236 / T118) (Rhodoferax ferrireducens)).